We begin with the raw amino-acid sequence, 498 residues long: ATP synthase subunit beta, chloroplastic (498 aa).

172-179 (GGAGVGKT) contributes to the ATP binding site.

Belongs to the ATPase alpha/beta chains family. F-type ATPases have 2 components, CF(1) - the catalytic core - and CF(0) - the membrane proton channel. CF(1) has five subunits: alpha(3), beta(3), gamma(1), delta(1), epsilon(1). CF(0) has four main subunits: a(1), b(1), b'(1) and c(9-12).

It is found in the plastid. The protein localises to the chloroplast thylakoid membrane. It carries out the reaction ATP + H2O + 4 H(+)(in) = ADP + phosphate + 5 H(+)(out). Produces ATP from ADP in the presence of a proton gradient across the membrane. The catalytic sites are hosted primarily by the beta subunits. The polypeptide is ATP synthase subunit beta, chloroplastic (Platanus occidentalis (Sycamore)).